Consider the following 1462-residue polypeptide: NK-tumor recognition protein (1462 aa).

The PPIase cyclophilin-type domain occupies 10 to 175; that stretch reads HFDIEINREP…ADVRVIDCGV (166 aa). Disordered stretches follow at residues 187-591 and 607-627; these read KKRK…TMAQ and VIPLSDSPPPSRWKPGQKPWK. Residues 198–213 are compositionally biased toward low complexity; that stretch reads SDSSSNSSSSSESSSE. A compositionally biased stretch (basic residues) spans 221 to 240; that stretch reads SRRRKHKRRPKVKRSKKRRK. Composition is skewed to basic and acidic residues over residues 241 to 250 and 258 to 286; these read EASSSEEPRN and GHSERSDTNEKRSVDSSAKREKPVVRPEE. Lys-323 participates in a covalent cross-link: Glycyl lysine isopeptide (Lys-Gly) (interchain with G-Cter in SUMO2). Basic residues predominate over residues 329 to 345; it reads SGRKIKGRGTIRYHTPP. Residues Ser-379, Ser-401, and Ser-416 each carry the phosphoserine modification. Positions 382 to 402 are enriched in basic and acidic residues; the sequence is KWSKGDKLSDPCSSRWDERSL. Residues 403 to 421 are compositionally biased toward polar residues; that stretch reads SQRSRSWSYNGYYSDLSTA. Residues 423-459 are compositionally biased toward basic residues; sequence HSGHHKKRRKEKKVKHKKKGKKQKHCRRHKQTKKRRI. Phosphoserine occurs at positions 463 and 471. Residues 497-507 are compositionally biased toward basic and acidic residues; that stretch reads KRDWSKSDKDV. Over residues 524–542 the composition is skewed to low complexity; sequence HSQSYSRGSSRSRTASKSS. The segment covering 543–568 has biased composition (basic residues); the sequence is SHSRSRSKSRSSSKSGHRKRASKSPR. Glycyl lysine isopeptide (Lys-Gly) (interchain with G-Cter in SUMO2) cross-links involve residues Lys-578 and Lys-581. Ser-613 is modified (phosphoserine). Residue Lys-639 forms a Glycyl lysine isopeptide (Lys-Gly) (interchain with G-Cter in SUMO2) linkage. Ser-648 carries the post-translational modification Phosphoserine. Residues Lys-656 and Lys-666 each participate in a glycyl lysine isopeptide (Lys-Gly) (interchain with G-Cter in SUMO2) cross-link. Positions 658 to 1072 are disordered; the sequence is TGSSSSYHKR…EEDLSGKHDT (415 aa). Low complexity-rich tracts occupy residues 699 to 725 and 736 to 749; these read SRSYSRSYTRSRSLASSHSRSRSPSSR and SQCSRSSSYTSISS. A compositionally biased stretch (basic residues) spans 754 to 774; that stretch reads RAKRRLRSSGKKNSVSHKKHS. The segment covering 775–800 has biased composition (basic and acidic residues); sequence SSSEKTLHSKYVKGRDRSSCVRKYSE. Low complexity predominate over residues 801-815; it reads SRSSLDYSSDSEQSS. Composition is skewed to basic and acidic residues over residues 823-870 and 885-909; these read QEKE…DHLR and WDSESNSERDVTKNSKNDSHPSSDK. A phosphoserine mark is found at Ser-866, Ser-887, Ser-889, Ser-891, and Ser-907. Positions 910 to 922 are enriched in acidic residues; it reads EEGEATSDSESEV. A compositionally biased stretch (polar residues) spans 932-969; it reads TTKSSTNTSLPDDNGAWKSSKQRTSTSDSEGSCSNSEN. A compositionally biased stretch (basic residues) spans 988–1013; it reads EHTKKVKEKLKGKKDKKHKAPKRKQA. Positions 1022–1031 are enriched in acidic residues; it reads FGEEEEEEID. A compositionally biased stretch (basic and acidic residues) spans 1032 to 1072; that stretch reads DKQVTQESKEKKVSENNETIKDNILKTEKSSEEDLSGKHDT. Lys-1057 participates in a covalent cross-link: Glycyl lysine isopeptide (Lys-Gly) (interchain with G-Cter in SUMO2). Phosphoserine occurs at positions 1077 and 1146. The tract at residues 1129–1156 is disordered; it reads MEICTPDRSSPAKVEETSPLGNARLDTP. Phosphothreonine is present on Thr-1155. Lys-1163 is covalently cross-linked (Glycyl lysine isopeptide (Lys-Gly) (interchain with G-Cter in SUMO2)). The interval 1169–1215 is disordered; the sequence is EHPQAEVVKQESSMSESKVLGEVGKQDSSSASLASAGESTGKKEVAE. Lys-1177 is covalently cross-linked (Glycyl lysine isopeptide (Lys-Gly) (interchain with G-Cter in SUMO1); alternate). Lys-1177 is covalently cross-linked (Glycyl lysine isopeptide (Lys-Gly) (interchain with G-Cter in SUMO2); alternate). Position 1203 is a phosphoserine (Ser-1203). Glycyl lysine isopeptide (Lys-Gly) (interchain with G-Cter in SUMO2) cross-links involve residues Lys-1216, Lys-1225, and Lys-1258. The tract at residues 1251–1462 is disordered; it reads LTTVPEMKPQ…RSPSESSRYS (212 aa). An arg/Ser tandem repeat-rich region spans residues 1311–1348; it reads SRSPSRSRSKSETKSRHRTRSVSYSHSRSRSRSSTSSY. Composition is skewed to low complexity over residues 1331 to 1351 and 1359 to 1376; these read SVSYSHSRSRSRSSTSSYRSR and RGWYSRGRTRSRSSSYRS. Over residues 1377–1388 the composition is skewed to basic residues; the sequence is YKSHRTSSRSRS. Positions 1389–1410 are enriched in low complexity; sequence RSSSYDPHSRSRSYTYDSYYSR. The span at 1425-1435 shows a compositional bias: basic residues; it reads RGRSYNRRSRS.

Its subcellular location is the cell membrane. It catalyses the reaction [protein]-peptidylproline (omega=180) = [protein]-peptidylproline (omega=0). Its activity is regulated as follows. Inhibited by cyclosporin A (CsA). In terms of biological role, PPIase that catalyzes the cis-trans isomerization of proline imidic peptide bonds in oligopeptides and may therefore assist protein folding. Component of a putative tumor-recognition complex involved in the function of NK cells. The protein is NK-tumor recognition protein of Homo sapiens (Human).